A 355-amino-acid polypeptide reads, in one-letter code: uncharacterized protein (355 aa).

Positions 9–75 constitute a J domain; it reads DYYDILNISV…KLREKYDKLG (67 aa).

This sequence belongs to the DnaJ family.

The protein resides in the cytoplasm. This is an uncharacterized protein from Schizosaccharomyces pombe (strain 972 / ATCC 24843) (Fission yeast).